Reading from the N-terminus, the 279-residue chain is Tryptophan synthase alpha chain (279 aa).

Catalysis depends on proton acceptor residues E50 and D61.

It belongs to the TrpA family. Tetramer of two alpha and two beta chains.

The catalysed reaction is (1S,2R)-1-C-(indol-3-yl)glycerol 3-phosphate + L-serine = D-glyceraldehyde 3-phosphate + L-tryptophan + H2O. Its pathway is amino-acid biosynthesis; L-tryptophan biosynthesis; L-tryptophan from chorismate: step 5/5. The alpha subunit is responsible for the aldol cleavage of indoleglycerol phosphate to indole and glyceraldehyde 3-phosphate. This is Tryptophan synthase alpha chain from Brucella abortus (strain S19).